Consider the following 363-residue polypeptide: Homeobox protein Hox-A2 (363 aa).

Disordered stretches follow at residues 23-133 and 183-216; these read TSFP…SRRL and MKHK…DEEK. Composition is skewed to polar residues over residues 31-46 and 55-78; these read TFQS…SHST and TIPS…NGTS. Residues 88-93 carry the Antp-type hexapeptide motif; the sequence is EYPWMK. A DNA-binding region (homeobox) is located at residues 130–189; the sequence is SRRLRTAYTNTQLLELEKEFHFNKYLCRPRRVEIAALLDLTERQVKVWFQNRRMKHKRQT.

It belongs to the Antp homeobox family. Proboscipedia subfamily.

The protein resides in the nucleus. Functionally, sequence-specific transcription factor which is part of a developmental regulatory system that provides cells with specific positional identities on the anterior-posterior axis. The chain is Homeobox protein Hox-A2 (HOXA2) from Heterodontus francisci (Horn shark).